Here is a 360-residue protein sequence, read N- to C-terminus: Phospho-N-acetylmuramoyl-pentapeptide-transferase (360 aa).

10 helical membrane passes run 25 to 45, 73 to 93, 97 to 117, 135 to 155, 170 to 190, 199 to 219, 236 to 256, 263 to 283, 288 to 308, and 338 to 358; these read RGILGVLTALTLSLCLGPWMI, TMGGALILSSIGISTLLWADL, YVWVVLLVTFLFGAIGWVDDY, FWQSVFGLCAAIFLYTTAPSA, IPLGIGFIVLTYFVIVGSSNA, GLAIMPTVMVGGALGIFCYLS, AGELIVFSGALIGAGLGFLWF, VFMGDVGALALGAALGTMAVI, MVLFIMGGVFVMETLSVVIQV, and VIVRFWIITVILVLIGLATLK.

This sequence belongs to the glycosyltransferase 4 family. MraY subfamily. It depends on Mg(2+) as a cofactor.

Its subcellular location is the cell inner membrane. It carries out the reaction UDP-N-acetyl-alpha-D-muramoyl-L-alanyl-gamma-D-glutamyl-meso-2,6-diaminopimeloyl-D-alanyl-D-alanine + di-trans,octa-cis-undecaprenyl phosphate = di-trans,octa-cis-undecaprenyl diphospho-N-acetyl-alpha-D-muramoyl-L-alanyl-D-glutamyl-meso-2,6-diaminopimeloyl-D-alanyl-D-alanine + UMP. Its pathway is cell wall biogenesis; peptidoglycan biosynthesis. Catalyzes the initial step of the lipid cycle reactions in the biosynthesis of the cell wall peptidoglycan: transfers peptidoglycan precursor phospho-MurNAc-pentapeptide from UDP-MurNAc-pentapeptide onto the lipid carrier undecaprenyl phosphate, yielding undecaprenyl-pyrophosphoryl-MurNAc-pentapeptide, known as lipid I. This Pseudomonas syringae pv. syringae (strain B728a) protein is Phospho-N-acetylmuramoyl-pentapeptide-transferase.